A 488-amino-acid chain; its full sequence is Arginine biosynthesis bifunctional protein ArgJ, mitochondrial (488 aa).

Substrate-binding residues include T227, K250, T261, E340, N483, and S488. T261 acts as the Nucleophile in catalysis.

The protein belongs to the ArgJ family. Heterodimer of an alpha and a beta chain. Post-translationally, the alpha and beta chains are autoproteolytically processed from a single precursor protein within the mitochondrion.

The protein resides in the mitochondrion matrix. It catalyses the reaction N(2)-acetyl-L-ornithine + L-glutamate = N-acetyl-L-glutamate + L-ornithine. The enzyme catalyses L-glutamate + acetyl-CoA = N-acetyl-L-glutamate + CoA + H(+). It functions in the pathway amino-acid biosynthesis; L-arginine biosynthesis; L-ornithine and N-acetyl-L-glutamate from L-glutamate and N(2)-acetyl-L-ornithine (cyclic): step 1/1. It participates in amino-acid biosynthesis; L-arginine biosynthesis; N(2)-acetyl-L-ornithine from L-glutamate: step 1/4. In terms of biological role, catalyzes two activities which are involved in the cyclic version of arginine biosynthesis: the synthesis of acetylglutamate from glutamate and acetyl-CoA, and of ornithine by transacetylation between acetylornithine and glutamate. The chain is Arginine biosynthesis bifunctional protein ArgJ, mitochondrial from Thalassiosira pseudonana (Marine diatom).